The following is a 460-amino-acid chain: Putative type II methyltransferase M.OihORF3336P (460 aa).

The 444-residue stretch at 15–458 (PEVVDLFSGC…EAMKKNIQGG (444 aa)) folds into the SAM-dependent MTase C5-type domain. The active site involves Cys97.

It belongs to the class I-like SAM-binding methyltransferase superfamily. C5-methyltransferase family.

The catalysed reaction is a 2'-deoxycytidine in DNA + S-adenosyl-L-methionine = a 5-methyl-2'-deoxycytidine in DNA + S-adenosyl-L-homocysteine + H(+). Functionally, a methylase, recognizes the double-stranded sequence 5'-ACCGGT-3', methylates C-? on both strands. No endonuclease has been identified for this methylase. In Oceanobacillus iheyensis (strain DSM 14371 / CIP 107618 / JCM 11309 / KCTC 3954 / HTE831), this protein is Putative type II methyltransferase M.OihORF3336P.